The primary structure comprises 908 residues: E3 ubiquitin-protein ligase ZNF598 (908 aa).

The RING-type zinc-finger motif lies at 27–67 (CVLCCGDLEATALGRCDHPVCYRCSTKMRVLCEQRYCAVCR). The C2H2-type zinc finger occupies 185–208 (PLCKFCDERYLDNDELLKHLRRDH). Disordered regions lie at residues 292 to 338 (SRRS…KREE), 350 to 441 (SVAA…EEDF), 467 to 557 (PGPP…TVQG), 569 to 619 (SLLA…LEAP), and 719 to 744 (PSSH…TPGL). At Ser295 the chain carries Phosphoserine. Tyr304 is subject to Phosphotyrosine. A compositionally biased stretch (low complexity) spans 313-329 (QGRAGRASGRGAQQNRR). The segment covering 358–385 (ETQRVEDREEGSRPKKEEAAARVPEEPR) has biased composition (basic and acidic residues). Ser433 is modified (phosphoserine). Positions 482–501 (PALVSSAPKPSSAPSSLISA) are enriched in low complexity. Basic residues predominate over residues 529 to 538 (KAGKGSRGGR).

The protein belongs to the ZNF598/HEL2 family. In terms of assembly, interacts with the E2 ubiquitin-conjugating enzyme UBE2D3. Component of the 4EHP-GYF2 complex, at least composed of EIF4E2, GIGYF2 and ZNF598.

The protein resides in the cytoplasm. It localises to the cytosol. The catalysed reaction is S-ubiquitinyl-[E2 ubiquitin-conjugating enzyme]-L-cysteine + [acceptor protein]-L-lysine = [E2 ubiquitin-conjugating enzyme]-L-cysteine + N(6)-ubiquitinyl-[acceptor protein]-L-lysine.. The protein operates within protein modification; protein ubiquitination. E3 ubiquitin-protein ligase that plays a key role in the ribosome quality control (RQC), a pathway that takes place when a ribosome has stalled during translation, leading to degradation of nascent peptide chains. ZNF598 is activated when ribosomes are stalled within an mRNA following translation of prematurely polyadenylated mRNAs. Acts as a ribosome collision sensor: specifically recognizes and binds collided di-ribosome, which arises when a trailing ribosome encounters a slower leading ribosome, leading to terminally arrest translation. Following binding to colliding ribosomes, mediates monoubiquitination of 40S ribosomal proteins RPS10/eS10 and RPS3/uS3, and 'Lys-63'-linked polyubiquitination of RPS20/uS10. Polyubiquitination of RPS20/uS10 promotes recruitment of the RQT (ribosome quality control trigger) complex, which drives the disassembly of stalled ribosomes, followed by degradation of nascent peptides. E3 ubiquitin-protein ligase activity is dependent on the E2 ubiquitin-conjugating enzyme UBE2D3. Also acts as an adapter that recruits the 4EHP-GYF2 complex to mRNAs. Independently of its role in RQC, may also act as a negative regulator of interferon-stimulated gene (ISG) expression. This chain is E3 ubiquitin-protein ligase ZNF598, found in Mus musculus (Mouse).